A 635-amino-acid chain; its full sequence is Threonine--tRNA ligase (635 aa).

Residues 1–144 (MQLLLIHSDY…RTIRLEGAVP (144 aa)) form an editing domain region. The tract at residues 215-514 (PHVELMRRLE…AEEGKVPNLP (300 aa)) is catalytic. Zn(2+) is bound by residues Cys-307, His-359, and His-483.

This sequence belongs to the class-II aminoacyl-tRNA synthetase family. In terms of assembly, homodimer. It depends on Zn(2+) as a cofactor.

The protein resides in the cytoplasm. The enzyme catalyses tRNA(Thr) + L-threonine + ATP = L-threonyl-tRNA(Thr) + AMP + diphosphate + H(+). Functionally, catalyzes the attachment of threonine to tRNA(Thr) in a two-step reaction: L-threonine is first activated by ATP to form Thr-AMP and then transferred to the acceptor end of tRNA(Thr). Also edits incorrectly charged L-seryl-tRNA(Thr). This chain is Threonine--tRNA ligase, found in Methanococcoides burtonii (strain DSM 6242 / NBRC 107633 / OCM 468 / ACE-M).